A 360-amino-acid chain; its full sequence is Peptide chain release factor 1 (360 aa).

Gln-235 carries the N5-methylglutamine modification. The span at 285 to 295 (RQAAEQADTRR) shows a compositional bias: basic and acidic residues. The interval 285 to 309 (RQAAEQADTRRNLLGSGDRSDKIRT) is disordered.

It belongs to the prokaryotic/mitochondrial release factor family. Post-translationally, methylated by PrmC. Methylation increases the termination efficiency of RF1.

Its subcellular location is the cytoplasm. Peptide chain release factor 1 directs the termination of translation in response to the peptide chain termination codons UAG and UAA. The polypeptide is Peptide chain release factor 1 (Actinobacillus pleuropneumoniae serotype 7 (strain AP76)).